Here is a 204-residue protein sequence, read N- to C-terminus: MWAVYLQGVLLGAAMILPLGPQNAFVMNQGIRRQYHLMVALLCAVSDMVLISAGIFGGSALLNQSSLLLGAVTCGGVAFLLWFGWGAMKTAFSKNIALTSADVMKQSRWRIIATMLAVTWLNPHVYLDTFVVLGSLGSQFADDARRWFALGTMTASFTWFFALALLAAWLAPWLNTPRVQRVINFFVGMVMWGIALQLARHGWQ.

The next 6 helical transmembrane spans lie at methionine 1–proline 21, leucine 37–glycine 57, leucine 67–alanine 87, isoleucine 111–valine 131, threonine 154–leucine 174, and valine 179–alanine 199.

The protein belongs to the LysE/ArgO transporter (TC 2.A.75) family.

It is found in the cell inner membrane. It carries out the reaction L-arginine(in) = L-arginine(out). Functionally, involved in the export of arginine. Important to control the intracellular level of arginine and the correct balance between arginine and lysine. The chain is Arginine exporter protein ArgO from Pectobacterium atrosepticum (strain SCRI 1043 / ATCC BAA-672) (Erwinia carotovora subsp. atroseptica).